A 259-amino-acid chain; its full sequence is Phosphatidylglycerol--prolipoprotein diacylglyceryl transferase (259 aa).

4 consecutive transmembrane segments (helical) span residues 9–29 (IIFS…VIGI), 55–75 (FITY…VLLY), 92–112 (EGGM…YLFC), and 117–137 (INFL…LFLG). Arg138 contacts a 1,2-diacyl-sn-glycero-3-phospho-(1'-sn-glycerol). Transmembrane regions (helical) follow at residues 172–192 (QLYE…YTTF), 201–221 (GLNS…IEIF), and 228–248 (IGFI…MLLL).

The protein belongs to the Lgt family.

It is found in the cell inner membrane. The enzyme catalyses L-cysteinyl-[prolipoprotein] + a 1,2-diacyl-sn-glycero-3-phospho-(1'-sn-glycerol) = an S-1,2-diacyl-sn-glyceryl-L-cysteinyl-[prolipoprotein] + sn-glycerol 1-phosphate + H(+). The protein operates within protein modification; lipoprotein biosynthesis (diacylglyceryl transfer). In terms of biological role, catalyzes the transfer of the diacylglyceryl group from phosphatidylglycerol to the sulfhydryl group of the N-terminal cysteine of a prolipoprotein, the first step in the formation of mature lipoproteins. The polypeptide is Phosphatidylglycerol--prolipoprotein diacylglyceryl transferase (Rickettsia africae (strain ESF-5)).